A 795-amino-acid polypeptide reads, in one-letter code: Endoplasmin (795 aa).

Residues 1 to 21 form the signal peptide; the sequence is MKSAWALALACTLLLAASVTA. The SRT pseudosubstrate motif signature appears at 41–43; sequence SRT. Residues asparagine 61 and asparagine 106 are each glycosylated (N-linked (GlcNAc...) asparagine). Positions 106, 148, 161, and 198 each coordinate ATP. Asparagine 216 carries N-linked (GlcNAc...) asparagine glycosylation. Positions 289–316 are enriched in acidic residues; that stretch reads EEPVEEEEAKEEKEETDDNEAAVEEEEE. The disordered stretch occupies residues 289–322; that stretch reads EEPVEEEEAKEEKEETDDNEAAVEEEEEEKKPKT. N-linked (GlcNAc...) asparagine glycosylation is found at asparagine 444, asparagine 480, and asparagine 501. Positions 751 to 795 are disordered; it reads DAKVEEEPEEPEDAAEEAEQDEEEVDADAEDSETQKESTDVKDEL. A compositionally biased stretch (acidic residues) spans 756-782; it reads EEPEEPEDAAEEAEQDEEEVDADAEDS. Basic and acidic residues predominate over residues 783 to 795; sequence ETQKESTDVKDEL. The Prevents secretion from ER motif lies at 792–795; sequence KDEL.

Belongs to the heat shock protein 90 family. Homodimer; disulfide-linked.

The protein localises to the endoplasmic reticulum lumen. The protein resides in the sarcoplasmic reticulum lumen. The enzyme catalyses ATP + H2O = ADP + phosphate + H(+). Functionally, ATP-dependent chaperone involved in the processing of proteins in the endoplasmic reticulum, regulating their transport. In Gallus gallus (Chicken), this protein is Endoplasmin (HSP90B1).